A 261-amino-acid chain; its full sequence is Pyridoxine-5'-phosphate oxidase (261 aa).

42-45 (RGDR) contacts pyridoxal 5'-phosphate. An FMN-binding site is contributed by 95 to 98 (RMLL). Lysine 100 serves as a coordination point for pyridoxal 5'-phosphate. FMN is bound by residues 110-111 (FT), 116-117 (RK), and glutamine 139. Tyrosine 157, arginine 161, and serine 165 together coordinate pyridoxal 5'-phosphate. Residues 174–175 (QS) and tryptophan 219 contribute to the FMN site. 225–227 (RLH) is a binding site for pyridoxal 5'-phosphate. Arginine 229 is a binding site for FMN. A Phosphothreonine modification is found at threonine 238. At serine 241 the chain carries Phosphoserine.

This sequence belongs to the pyridoxamine 5'-phosphate oxidase family. As to quaternary structure, homodimer. Requires FMN as cofactor. Ubiquitous. Expressed in liver, brain, lung, prostate and stomach (at protein level).

The catalysed reaction is pyridoxine 5'-phosphate + O2 = pyridoxal 5'-phosphate + H2O2. It catalyses the reaction pyridoxamine 5'-phosphate + O2 + H2O = pyridoxal 5'-phosphate + H2O2 + NH4(+). It functions in the pathway cofactor metabolism; pyridoxal 5'-phosphate salvage; pyridoxal 5'-phosphate from pyridoxamine 5'-phosphate: step 1/1. Its pathway is cofactor metabolism; pyridoxal 5'-phosphate salvage; pyridoxal 5'-phosphate from pyridoxine 5'-phosphate: step 1/1. Functionally, catalyzes the oxidation of either pyridoxine 5'-phosphate (PNP) or pyridoxamine 5'-phosphate (PMP) into pyridoxal 5'-phosphate (PLP). The sequence is that of Pyridoxine-5'-phosphate oxidase (PNPO) from Homo sapiens (Human).